Reading from the N-terminus, the 184-residue chain is ATP synthase subunit b 1 (184 aa).

A helical transmembrane segment spans residues 4–24; sequence LSILAALAASPAMAATGPFFS.

The protein belongs to the ATPase B chain family. F-type ATPases have 2 components, F(1) - the catalytic core - and F(0) - the membrane proton channel. F(1) has five subunits: alpha(3), beta(3), gamma(1), delta(1), epsilon(1). F(0) has three main subunits: a(1), b(2) and c(10-14). The alpha and beta chains form an alternating ring which encloses part of the gamma chain. F(1) is attached to F(0) by a central stalk formed by the gamma and epsilon chains, while a peripheral stalk is formed by the delta and b chains.

It is found in the cell inner membrane. F(1)F(0) ATP synthase produces ATP from ADP in the presence of a proton or sodium gradient. F-type ATPases consist of two structural domains, F(1) containing the extramembraneous catalytic core and F(0) containing the membrane proton channel, linked together by a central stalk and a peripheral stalk. During catalysis, ATP synthesis in the catalytic domain of F(1) is coupled via a rotary mechanism of the central stalk subunits to proton translocation. Its function is as follows. Component of the F(0) channel, it forms part of the peripheral stalk, linking F(1) to F(0). This chain is ATP synthase subunit b 1, found in Cereibacter sphaeroides (strain ATCC 17025 / ATH 2.4.3) (Rhodobacter sphaeroides).